The sequence spans 743 residues: Phosphoribosylformylglycinamidine synthase subunit PurL (743 aa).

His-50 is a catalytic residue. Residues Tyr-53 and Lys-92 each contribute to the ATP site. Glu-94 is a binding site for Mg(2+). Substrate contacts are provided by residues 95–98 and Arg-117; that span reads SHNH. His-96 serves as the catalytic Proton acceptor. Asp-118 contacts Mg(2+). A substrate-binding site is contributed by Gln-241. Residue Asp-269 participates in Mg(2+) binding. 313 to 315 contacts substrate; that stretch reads ESQ. Positions 494 and 531 each coordinate ATP. Asn-532 is a binding site for Mg(2+). Ser-534 serves as a coordination point for substrate.

This sequence belongs to the FGAMS family. In terms of assembly, monomer. Part of the FGAM synthase complex composed of 1 PurL, 1 PurQ and 2 PurS subunits.

The protein localises to the cytoplasm. It carries out the reaction N(2)-formyl-N(1)-(5-phospho-beta-D-ribosyl)glycinamide + L-glutamine + ATP + H2O = 2-formamido-N(1)-(5-O-phospho-beta-D-ribosyl)acetamidine + L-glutamate + ADP + phosphate + H(+). The protein operates within purine metabolism; IMP biosynthesis via de novo pathway; 5-amino-1-(5-phospho-D-ribosyl)imidazole from N(2)-formyl-N(1)-(5-phospho-D-ribosyl)glycinamide: step 1/2. Part of the phosphoribosylformylglycinamidine synthase complex involved in the purines biosynthetic pathway. Catalyzes the ATP-dependent conversion of formylglycinamide ribonucleotide (FGAR) and glutamine to yield formylglycinamidine ribonucleotide (FGAM) and glutamate. The FGAM synthase complex is composed of three subunits. PurQ produces an ammonia molecule by converting glutamine to glutamate. PurL transfers the ammonia molecule to FGAR to form FGAM in an ATP-dependent manner. PurS interacts with PurQ and PurL and is thought to assist in the transfer of the ammonia molecule from PurQ to PurL. The polypeptide is Phosphoribosylformylglycinamidine synthase subunit PurL (Sinorhizobium fredii (strain HH103)).